The following is a 382-amino-acid chain: Gap junction alpha-1 protein (382 aa).

Residues 2–23 (GDWSALGKLLDKVQAYSTAGGK) lie on the Cytoplasmic side of the membrane. Ser5 is modified (phosphoserine). The helical transmembrane segment at 24–44 (VWLSVLFIFRILLLGTAVESA) threads the bilayer. The Extracellular segment spans residues 45–76 (WGDEQSAFRCNTQQPGCENVCYDKSFPISHVR). Intrachain disulfides connect Cys54–Cys192 and Cys187–Cys198. Residues 77–97 (FWVLQIIFVSVPTLLYLAHVF) form a helical membrane-spanning segment. The Cytoplasmic segment spans residues 98 to 155 (YVMRKEEKLNKKEEELKVAQTDGVNVEMHLKQIEIKKFKYGIEEHGKVKMRGGLLRTY). Lys144 participates in a covalent cross-link: Glycyl lysine isopeptide (Lys-Gly) (interchain with G-Cter in SUMO). Residues 156 to 176 (IISILFKSIFEVAFLLIQWYI) form a helical membrane-spanning segment. The Extracellular segment spans residues 177-207 (YGFSLSAVYTCKRDPCPHQVDCFLSRPTEKT). A helical membrane pass occupies residues 208–228 (IFIIFMLVVSLVSLALNIIEL). Over 229-382 (FYVFFKGVKD…SRPRPDDLEI (154 aa)) the chain is Cytoplasmic. Residue Lys237 forms a Glycyl lysine isopeptide (Lys-Gly) (interchain with G-Cter in SUMO) linkage. Positions 244 to 382 (SDPYHATSGA…SRPRPDDLEI (139 aa)) are interaction with NOV. At Tyr247 the chain carries Phosphotyrosine. Phosphoserine is present on residues Ser255 and Ser262. Residues 264-382 (KYAYFNGCSS…SRPRPDDLEI (119 aa)) are interaction with UBQLN4. An S-nitrosocysteine modification is found at Cys271. Position 275 is a phosphothreonine (Thr275). Residues 279–300 (SPMSPPGYKPVTGDRNNSSCRN) are disordered. Phosphoserine occurs at positions 306 and 314. Positions 317-332 (QNRMGQAGSTISNSHA) are enriched in polar residues. The interval 317–382 (QNRMGQAGST…SRPRPDDLEI (66 aa)) is disordered. Phosphoserine; by CK1 is present on Ser325. A Phosphothreonine modification is found at Thr326. Phosphoserine; by CK1 occurs at positions 328 and 330. Ser344 and Ser365 each carry phosphoserine. A compositionally biased stretch (low complexity) spans 362 to 374 (RPSSRASSRASSR). Ser368 carries the post-translational modification Phosphoserine; by PKC/PRKCG and PKC/PRKCD. A phosphoserine mark is found at Ser369 and Ser373.

It belongs to the connexin family. Alpha-type (group II) subfamily. In terms of assembly, a connexon is composed of a hexamer of connexins. Interacts with SGSM3. Interacts with RIC1/CIP150. Interacts with CNST and CSNK1D. Interacts (via C-terminus) with TJP1. Interacts (via C-terminus) with SRC (via SH3 domain). Interacts (not ubiquitinated) with UBQLN4 (via UBA domain). Interacts with NOV. Interacts with TMEM65. Interacts with ANK3/ANKG and PKP2. Phosphorylation at Ser-325, Ser-328 and Ser-330 by CK1 modulates gap junction assembly. Phosphorylated at Ser-368 by PRKCG; phosphorylation induces disassembly of gap junction plaques and inhibition of gap junction activity. Phosphorylation at Ser-368 by PRKCD triggers its internalization into small vesicles leading to proteasome-mediated degradation. Post-translationally, sumoylated with SUMO1, SUMO2 and SUMO3, which may regulate the level of functional Cx43 gap junctions at the plasma membrane. May be desumoylated by SENP1 or SENP2. In terms of processing, S-nitrosylation at Cys-271 is enriched at the muscle endothelial gap junction in arteries, it augments channel permeability and may regulate of smooth muscle cell to endothelial cell communication. Acetylated in the developing cortex; leading to delocalization from the cell membrane.

It is found in the cell membrane. The protein localises to the cell junction. It localises to the gap junction. The protein resides in the endoplasmic reticulum. In terms of biological role, gap junction protein that acts as a regulator of bladder capacity. A gap junction consists of a cluster of closely packed pairs of transmembrane channels, the connexons, through which materials of low MW diffuse from one cell to a neighboring cell. May play a critical role in the physiology of hearing by participating in the recycling of potassium to the cochlear endolymph. Negative regulator of bladder functional capacity: acts by enhancing intercellular electrical and chemical transmission, thus sensitizing bladder muscles to cholinergic neural stimuli and causing them to contract. May play a role in cell growth inhibition through the regulation of NOV expression and localization. Plays an essential role in gap junction communication in the ventricles. This is Gap junction alpha-1 protein (GJA1) from Macaca fascicularis (Crab-eating macaque).